Reading from the N-terminus, the 241-residue chain is 1-(5-phosphoribosyl)-5-[(5-phosphoribosylamino)methylideneamino] imidazole-4-carboxamide isomerase (241 aa).

The Proton acceptor role is filled by aspartate 10. Aspartate 131 acts as the Proton donor in catalysis.

Belongs to the HisA/HisF family.

The protein localises to the cytoplasm. The enzyme catalyses 1-(5-phospho-beta-D-ribosyl)-5-[(5-phospho-beta-D-ribosylamino)methylideneamino]imidazole-4-carboxamide = 5-[(5-phospho-1-deoxy-D-ribulos-1-ylimino)methylamino]-1-(5-phospho-beta-D-ribosyl)imidazole-4-carboxamide. It functions in the pathway amino-acid biosynthesis; L-histidine biosynthesis; L-histidine from 5-phospho-alpha-D-ribose 1-diphosphate: step 4/9. This chain is 1-(5-phosphoribosyl)-5-[(5-phosphoribosylamino)methylideneamino] imidazole-4-carboxamide isomerase, found in Bifidobacterium longum (strain NCC 2705).